Here is a 348-residue protein sequence, read N- to C-terminus: tRNA pseudouridine synthase D (348 aa).

Aspartate 81 functions as the Nucleophile in the catalytic mechanism. The TRUD domain occupies 158–304; that stretch reads GVPNYFGAQR…MRHERRSIEL (147 aa).

Belongs to the pseudouridine synthase TruD family.

The enzyme catalyses uridine(13) in tRNA = pseudouridine(13) in tRNA. Functionally, responsible for synthesis of pseudouridine from uracil-13 in transfer RNAs. The polypeptide is tRNA pseudouridine synthase D (Aliivibrio salmonicida (strain LFI1238) (Vibrio salmonicida (strain LFI1238))).